The sequence spans 399 residues: Ribonuclease T2-like 1-A (399 aa).

The signal sequence occupies residues 1–17; it reads MLSILSIAALLIATVQA. Disulfide bonds link Cys-24/Cys-43, Cys-32/Cys-79, Cys-42/Cys-150, Cys-87/Cys-142, and Cys-214/Cys-249. Active-site residues include His-72, Glu-135, and His-139. The interval 259–279 is disordered; it reads KGNSGANTLTTKTTGTTTSGS. Residues 262–279 show a composition bias toward low complexity; sequence SGANTLTTKTTGTTTSGS. An N-linked (GlcNAc...) asparagine glycan is attached at Asn-291.

It belongs to the RNase T2 family.

The protein resides in the vacuole lumen. It is found in the cytoplasm. The catalysed reaction is a ribonucleotidyl-ribonucleotide-RNA + H2O = a 3'-end 3'-phospho-ribonucleotide-RNA + a 5'-end dephospho-ribonucleoside-RNA + H(+). Rnase which modulates cell survival under stress conditions. Released from the vacuole to the cytoplasm during stress to promote tRNA and rRNA cleavage and to activate separately a downstream pathway that promotes cell death. Involved in cell size, vacuolar morphology and growth at high temperatures and high salt concentration. The polypeptide is Ribonuclease T2-like 1-A (RNY1-A) (Candida albicans (strain SC5314 / ATCC MYA-2876) (Yeast)).